Here is a 143-residue protein sequence, read N- to C-terminus: Small ribosomal subunit protein uS12B (143 aa).

At Pro-62 the chain carries 3,4-dihydroxyproline.

This sequence belongs to the universal ribosomal protein uS12 family. In terms of assembly, component of the small ribosomal subunit (SSU). Mature yeast ribosomes consist of a small (40S) and a large (60S) subunit. The 40S small subunit contains 1 molecule of ribosomal RNA (18S rRNA) and at least 33 different proteins. The large 60S subunit contains 3 rRNA molecules (25S, 5.8S and 5S rRNA) and at least 46 different proteins. Post-translationally, hydroxylation at Pro-62 affects translation termination efficiency.

The protein localises to the cytoplasm. It is found in the nucleus. It localises to the nucleolus. Component of the ribosome, a large ribonucleoprotein complex responsible for the synthesis of proteins in the cell. The small ribosomal subunit (SSU) binds messenger RNAs (mRNAs) and translates the encoded message by selecting cognate aminoacyl-transfer RNA (tRNA) molecules. The large subunit (LSU) contains the ribosomal catalytic site termed the peptidyl transferase center (PTC), which catalyzes the formation of peptide bonds, thereby polymerizing the amino acids delivered by tRNAs into a polypeptide chain. The nascent polypeptides leave the ribosome through a tunnel in the LSU and interact with protein factors that function in enzymatic processing, targeting, and the membrane insertion of nascent chains at the exit of the ribosomal tunnel. The polypeptide is Small ribosomal subunit protein uS12B (rps2302) (Schizosaccharomyces pombe (strain 972 / ATCC 24843) (Fission yeast)).